Here is an 82-residue protein sequence, read N- to C-terminus: MDKKEEENLIKRINELTKISRERELTPDELEERKKLRSAFLENFRAGFRQQLEDTVVIDKDGKEVTSEKAKEAQRRKGLRKD.

Positions 61–82 (DGKEVTSEKAKEAQRRKGLRKD) are disordered.

This sequence belongs to the UPF0291 family.

The protein localises to the cytoplasm. In Lactobacillus johnsonii (strain CNCM I-12250 / La1 / NCC 533), this protein is UPF0291 protein LJ_1507.